A 739-amino-acid chain; its full sequence is Phosphoribosylformylglycinamidine synthase subunit PurL (739 aa).

Histidine 54 is an active-site residue. ATP is bound by residues tyrosine 57 and lysine 96. Glutamate 98 serves as a coordination point for Mg(2+). Substrate contacts are provided by residues 99-102 and arginine 121; that span reads SHNH. Histidine 100 serves as the catalytic Proton acceptor. Aspartate 122 serves as a coordination point for Mg(2+). Glutamine 245 is a binding site for substrate. Residue aspartate 275 participates in Mg(2+) binding. 319-321 contacts substrate; it reads ESQ. ATP-binding residues include aspartate 504 and glycine 541. Asparagine 542 contacts Mg(2+). Serine 544 provides a ligand contact to substrate.

Belongs to the FGAMS family. In terms of assembly, monomer. Part of the FGAM synthase complex composed of 1 PurL, 1 PurQ and 2 PurS subunits.

The protein resides in the cytoplasm. It carries out the reaction N(2)-formyl-N(1)-(5-phospho-beta-D-ribosyl)glycinamide + L-glutamine + ATP + H2O = 2-formamido-N(1)-(5-O-phospho-beta-D-ribosyl)acetamidine + L-glutamate + ADP + phosphate + H(+). It participates in purine metabolism; IMP biosynthesis via de novo pathway; 5-amino-1-(5-phospho-D-ribosyl)imidazole from N(2)-formyl-N(1)-(5-phospho-D-ribosyl)glycinamide: step 1/2. Its function is as follows. Part of the phosphoribosylformylglycinamidine synthase complex involved in the purines biosynthetic pathway. Catalyzes the ATP-dependent conversion of formylglycinamide ribonucleotide (FGAR) and glutamine to yield formylglycinamidine ribonucleotide (FGAM) and glutamate. The FGAM synthase complex is composed of three subunits. PurQ produces an ammonia molecule by converting glutamine to glutamate. PurL transfers the ammonia molecule to FGAR to form FGAM in an ATP-dependent manner. PurS interacts with PurQ and PurL and is thought to assist in the transfer of the ammonia molecule from PurQ to PurL. This Lactococcus lactis subsp. cremoris (strain SK11) protein is Phosphoribosylformylglycinamidine synthase subunit PurL.